Consider the following 330-residue polypeptide: Ketol-acid reductoisomerase (NADP(+)) (330 aa).

The 181-residue stretch at 1–181 folds into the KARI N-terminal Rossmann domain; that stretch reads MKVLYDDDVN…GLTRAGVIET (181 aa). Residues 24 to 27, R47, S52, and 82 to 85 contribute to the NADP(+) site; these read YGSQ and DEIQ. The active site involves H107. Residue G133 participates in NADP(+) binding. Residues 182–327 form the KARI C-terminal knotted domain; it reads TYREETETDL…KNLRIACGLQ (146 aa). Positions 190, 194, 226, and 230 each coordinate Mg(2+). S251 serves as a coordination point for substrate.

This sequence belongs to the ketol-acid reductoisomerase family. It depends on Mg(2+) as a cofactor.

The enzyme catalyses (2R)-2,3-dihydroxy-3-methylbutanoate + NADP(+) = (2S)-2-acetolactate + NADPH + H(+). It carries out the reaction (2R,3R)-2,3-dihydroxy-3-methylpentanoate + NADP(+) = (S)-2-ethyl-2-hydroxy-3-oxobutanoate + NADPH + H(+). The protein operates within amino-acid biosynthesis; L-isoleucine biosynthesis; L-isoleucine from 2-oxobutanoate: step 2/4. It participates in amino-acid biosynthesis; L-valine biosynthesis; L-valine from pyruvate: step 2/4. Involved in the biosynthesis of branched-chain amino acids (BCAA). Catalyzes an alkyl-migration followed by a ketol-acid reduction of (S)-2-acetolactate (S2AL) to yield (R)-2,3-dihydroxy-isovalerate. In the isomerase reaction, S2AL is rearranged via a Mg-dependent methyl migration to produce 3-hydroxy-3-methyl-2-ketobutyrate (HMKB). In the reductase reaction, this 2-ketoacid undergoes a metal-dependent reduction by NADPH to yield (R)-2,3-dihydroxy-isovalerate. This chain is Ketol-acid reductoisomerase (NADP(+)), found in Methanosphaera stadtmanae (strain ATCC 43021 / DSM 3091 / JCM 11832 / MCB-3).